The following is a 121-amino-acid chain: Urotensin-2 (121 aa).

An N-terminal signal peptide occupies residues 1 to 19 (MSKLVPCLLLLGCLGLLFA). A propeptide spanning residues 20 to 106 (LPVPDSRKEP…HLLARIKKPY (87 aa)) is cleaved from the precursor. A disulfide bridge connects residues cysteine 115 and cysteine 120.

It belongs to the urotensin-2 family.

The protein localises to the secreted. Functionally, highly potent vasoconstrictor. This chain is Urotensin-2 (UTS2), found in Sus scrofa (Pig).